The following is a 93-amino-acid chain: Acylphosphatase (93 aa).

One can recognise an Acylphosphatase-like domain in the interval 7–93 (RAHVFVSGTV…EGIDGFHIRR (87 aa)). Active-site residues include arginine 22 and asparagine 40.

This sequence belongs to the acylphosphatase family.

It carries out the reaction an acyl phosphate + H2O = a carboxylate + phosphate + H(+). This is Acylphosphatase (acyP) from Haloquadratum walsbyi (strain DSM 16790 / HBSQ001).